We begin with the raw amino-acid sequence, 141 residues long: Cytochrome b-c1 complex subunit 6, mitochondrial (141 aa).

A compositionally biased stretch (low complexity) spans 18-37 (ATVEAEAPADTPAETAPASE). Positions 18–94 (ATVEAEAPAD…ECRNSKECAP (77 aa)) are disordered. The span at 56–75 (EEPEEEAEEEEEEEEDEDEI) shows a compositional bias: acidic residues. A compositionally biased stretch (basic and acidic residues) spans 76-94 (VDPKETLEEECRNSKECAP). Cys102 and Cys117 are oxidised to a cystine.

It belongs to the UQCRH/QCR6 family. In terms of assembly, component of the ubiquinol-cytochrome c oxidoreductase (cytochrome b-c1 complex, complex III, CIII), a multisubunit enzyme composed of 10 subunits. The complex is composed of 3 respiratory subunits cytochrome b (cob), cytochrome c1 (cyt-1) and Rieske protein (fes-1), 2 core protein subunits pep and ucr-1, and 5 low-molecular weight protein subunits qcr6, qcr7, qcr8, qcr9 and probably NCU16844/qcr10. The complex exists as an obligatory dimer and forms supercomplexes (SCs) in the inner mitochondrial membrane with NADH-ubiquinone oxidoreductase (complex I, CI) and cytochrome c oxidase (complex IV, CIV), resulting in different assemblies (supercomplexes SCI(1)III(2), SCIII(2)IV(1) and SCIII(2)IV(2) as well as higher order I(x)III(y)IV(z) megacomplexes).

Its subcellular location is the mitochondrion inner membrane. Functionally, component of the ubiquinol-cytochrome c oxidoreductase, a multisubunit transmembrane complex that is part of the mitochondrial electron transport chain which drives oxidative phosphorylation. The respiratory chain contains 3 multisubunit complexes succinate dehydrogenase (complex II, CII), ubiquinol-cytochrome c oxidoreductase (cytochrome b-c1 complex, complex III, CIII) and cytochrome c oxidase (complex IV, CIV), that cooperate to transfer electrons derived from NADH and succinate to molecular oxygen, creating an electrochemical gradient over the inner membrane that drives transmembrane transport and the ATP synthase. The cytochrome b-c1 complex catalyzes electron transfer from ubiquinol to cytochrome c, linking this redox reaction to translocation of protons across the mitochondrial inner membrane, with protons being carried across the membrane as hydrogens on the quinol. In the process called Q cycle, 2 protons are consumed from the matrix, 4 protons are released into the intermembrane space and 2 electrons are passed to cytochrome c. This Neurospora crassa (strain ATCC 24698 / 74-OR23-1A / CBS 708.71 / DSM 1257 / FGSC 987) protein is Cytochrome b-c1 complex subunit 6, mitochondrial (qcr6).